Consider the following 176-residue polypeptide: Peptide deformylase 1 (176 aa).

Residues Cys99 and His141 each coordinate Fe cation. The active site involves Glu142. Residue His145 coordinates Fe cation.

It belongs to the polypeptide deformylase family. The cofactor is Fe(2+).

The catalysed reaction is N-terminal N-formyl-L-methionyl-[peptide] + H2O = N-terminal L-methionyl-[peptide] + formate. Its function is as follows. Removes the formyl group from the N-terminal Met of newly synthesized proteins. Requires at least a dipeptide for an efficient rate of reaction. N-terminal L-methionine is a prerequisite for activity but the enzyme has broad specificity at other positions. The polypeptide is Peptide deformylase 1 (Bordetella pertussis (strain Tohama I / ATCC BAA-589 / NCTC 13251)).